Here is a 574-residue protein sequence, read N- to C-terminus: MAKNHKVEPVGGPPSDVEHLKLESNYLRGSLTDSLANRITGGLPDLDNRLLKFHGSYMQDDRDYRNEREKQKLEPYYQFMLRVVTPGGVATPEQWLLMDSLADKYGTGSLKLTTRQAFQLHGVLKWNLKKTIQEINAAMLSTLAACGDVSRNVMCNPNPYQSELHSEVFHWSQQLTSHLAPKTPAYHEIWLDGEKVVDGAEQGEVEPIYGPVYLPRKFKIGIAVPPSNDVDVYSQDLGYIAILGEDGKLAGFNVCVGGGMGMTHGDTATYPQLAKVIGFVTPDQVLDLAEKVVTIQRDYGNRSVRKYARFKYTIDRHGLPWFMDELQDRLGWELAPAREFHFEHTGDRYGWIKGKDGKWNLNLYVQAGRVVDTEDNKLRSALREIAKIHTGDFRLTANQNLVIANVTAQKKTKIVALLKEFGIAEGSNYSALRRSALSCVALPTCGLAMAEAERYLPSLIDRLEPILANAGLQDQEINIRMTGCPNGCARPALGEISFIGKSPGKYNMYMGAGFTGDRLSKMYKENIGEDEIIDTLTPIIDRYASERNKGENFGDFVIRAGYVKAVTDGTNFHD.

[4Fe-4S] cluster-binding residues include C439, C445, C484, and C488. A siroheme-binding site is contributed by C488.

Belongs to the nitrite and sulfite reductase 4Fe-4S domain family. As to quaternary structure, alpha(8)-beta(8). The alpha component is a flavoprotein, the beta component is a hemoprotein. Siroheme is required as a cofactor. The cofactor is [4Fe-4S] cluster.

The enzyme catalyses hydrogen sulfide + 3 NADP(+) + 3 H2O = sulfite + 3 NADPH + 4 H(+). It functions in the pathway sulfur metabolism; hydrogen sulfide biosynthesis; hydrogen sulfide from sulfite (NADPH route): step 1/1. In terms of biological role, component of the sulfite reductase complex that catalyzes the 6-electron reduction of sulfite to sulfide. This is one of several activities required for the biosynthesis of L-cysteine from sulfate. The protein is Sulfite reductase [NADPH] hemoprotein beta-component of Paenibacillus sp. (strain JDR-2).